Here is a 496-residue protein sequence, read N- to C-terminus: Flt3-interacting zinc finger protein 1 (496 aa).

Methionine 1 bears the N-acetylmethionine mark. 6 C2H2-type zinc fingers span residues 23–45 (FHCSECGKSFRYRSDLRRHFARH), 51–73 (HACPRCGKGFKHSFNLANHLRSH), 79–101 (YRCSACPKGFRDSTGLLHHQVVH), 107–130 (YCCLVCELRFSSRSSLGRHLKRQH), 200–222 (FACGACARRFDHGRELAAHWAAH), and 228–250 (FKCPRCERDFNAPALLERHKLTH). Residues 250–280 (HDLQGPGAPPAQAWAAGPGAGPETAGEGTAA) are disordered. A compositionally biased stretch (low complexity) spans 259-280 (PAQAWAAGPGAGPETAGEGTAA). C2H2-type zinc fingers lie at residues 331–352 (YQCDCGTFFASAAALASHLEAH), 358–381 (YGCGHCGALYAALAALEEHRRVSH), 414–436 (FGCSECEKLFRSPRDLERHVLVH), 442–464 (FPCLECGKFFRHECYLKRHRLLH), and 470–492 (FPCHICGKGFITLSNLSRHLKLH). The interval 378-412 (RVSHGEGGGEEAATAAREREPASGEPPSGSGRGKK) is disordered.

As to quaternary structure, interacts with FLT3 cytoplasmic catalytic domain, following receptor stimulation, in a kinase-independent manner. Does not interact with other structurally related receptor tyrosine kinases, including KIT, CSF1R and PDGFR. Interacts with NRL. Widely expressed.

The protein resides in the cytoplasm. Its subcellular location is the nucleus. Functionally, may be a transcriptional repressor of NRL function in photoreceptors. Does not repress CRX-mediated transactivation. This is Flt3-interacting zinc finger protein 1 (FIZ1) from Homo sapiens (Human).